We begin with the raw amino-acid sequence, 288 residues long: Elongation factor Ts (288 aa).

Residues 82 to 85 (TDFV) form an involved in Mg(2+) ion dislocation from EF-Tu region.

The protein belongs to the EF-Ts family.

It is found in the cytoplasm. Its function is as follows. Associates with the EF-Tu.GDP complex and induces the exchange of GDP to GTP. It remains bound to the aminoacyl-tRNA.EF-Tu.GTP complex up to the GTP hydrolysis stage on the ribosome. The polypeptide is Elongation factor Ts (Chlorobium phaeovibrioides (strain DSM 265 / 1930) (Prosthecochloris vibrioformis (strain DSM 265))).